Consider the following 120-residue polypeptide: NAD(P)H-quinone oxidoreductase subunit 3, chloroplastic (120 aa).

3 helical membrane-spanning segments follow: residues 9–29 (IFWAFLIISSLIPILVFFISG), 64–84 (MFALVFVVFDVETVFLYPWAM), and 88–108 (VLGVSVFVEALIFVLILIVGL).

Belongs to the complex I subunit 3 family. As to quaternary structure, NDH is composed of at least 16 different subunits, 5 of which are encoded in the nucleus.

The protein localises to the plastid. The protein resides in the chloroplast thylakoid membrane. It catalyses the reaction a plastoquinone + NADH + (n+1) H(+)(in) = a plastoquinol + NAD(+) + n H(+)(out). The enzyme catalyses a plastoquinone + NADPH + (n+1) H(+)(in) = a plastoquinol + NADP(+) + n H(+)(out). NDH shuttles electrons from NAD(P)H:plastoquinone, via FMN and iron-sulfur (Fe-S) centers, to quinones in the photosynthetic chain and possibly in a chloroplast respiratory chain. The immediate electron acceptor for the enzyme in this species is believed to be plastoquinone. Couples the redox reaction to proton translocation, and thus conserves the redox energy in a proton gradient. The chain is NAD(P)H-quinone oxidoreductase subunit 3, chloroplastic from Guizotia abyssinica (Niger).